A 424-amino-acid polypeptide reads, in one-letter code: tRNA modification GTPase MnmE (424 aa).

(6S)-5-formyl-5,6,7,8-tetrahydrofolate contacts are provided by arginine 20, glutamate 77, and arginine 117. The region spanning 212-351 (GVRVVFAGPP…LVRDLRDAAR (140 aa)) is the TrmE-type G domain. Asparagine 222 is a K(+) binding site. Residues 222-227 (NAGKST), 241-247 (SPIAGTT), and 266-269 (DTAG) each bind GTP. Serine 226 is a Mg(2+) binding site. K(+) contacts are provided by serine 241, isoleucine 243, and threonine 246. Position 247 (threonine 247) interacts with Mg(2+). Lysine 424 contributes to the (6S)-5-formyl-5,6,7,8-tetrahydrofolate binding site.

It belongs to the TRAFAC class TrmE-Era-EngA-EngB-Septin-like GTPase superfamily. TrmE GTPase family. As to quaternary structure, homodimer. Heterotetramer of two MnmE and two MnmG subunits. It depends on K(+) as a cofactor.

Its subcellular location is the cytoplasm. Exhibits a very high intrinsic GTPase hydrolysis rate. Involved in the addition of a carboxymethylaminomethyl (cmnm) group at the wobble position (U34) of certain tRNAs, forming tRNA-cmnm(5)s(2)U34. This Erythrobacter litoralis (strain HTCC2594) protein is tRNA modification GTPase MnmE.